The chain runs to 90 residues: Putative beta-neurotoxin RjAa2f (90 aa).

The first 18 residues, 1-18, serve as a signal peptide directing secretion; it reads MKILIFIIASFMLIGVEC. The 71-residue stretch at 19–89 folds into the LCN-type CS-alpha/beta domain; it reads KEGYPMGSDG…VWDSKTNKCG (71 aa). 4 disulfides stabilise this stretch: C29–C88, C33–C62, C40–C69, and C44–C71.

Belongs to the long (4 C-C) scorpion toxin superfamily. Sodium channel inhibitor family. Beta subfamily. As to expression, expressed by the venom gland.

It localises to the secreted. Functionally, beta toxins bind voltage-independently at site-4 of sodium channels (Nav) and shift the voltage of activation toward more negative potentials thereby affecting sodium channel activation and promoting spontaneous and repetitive firing. In Rhopalurus junceus (Caribbean blue scorpion), this protein is Putative beta-neurotoxin RjAa2f.